The following is a 273-amino-acid chain: Phosphatidylglycerol--prolipoprotein diacylglyceryl transferase (273 aa).

The next 7 membrane-spanning stretches (helical) occupy residues 21 to 41 (VSIR…LWLA), 60 to 80 (LLFA…VIFY), 95 to 115 (VWTG…AMFW), 124 to 144 (FFGV…MGRM), 176 to 196 (SQLY…NWFI), 203 to 223 (GSVS…VEFV), and 237 to 257 (ISMG…MMVW). An a 1,2-diacyl-sn-glycero-3-phospho-(1'-sn-glycerol)-binding site is contributed by R143.

This sequence belongs to the Lgt family.

It localises to the cell inner membrane. The catalysed reaction is L-cysteinyl-[prolipoprotein] + a 1,2-diacyl-sn-glycero-3-phospho-(1'-sn-glycerol) = an S-1,2-diacyl-sn-glyceryl-L-cysteinyl-[prolipoprotein] + sn-glycerol 1-phosphate + H(+). The protein operates within protein modification; lipoprotein biosynthesis (diacylglyceryl transfer). Its function is as follows. Catalyzes the transfer of the diacylglyceryl group from phosphatidylglycerol to the sulfhydryl group of the N-terminal cysteine of a prolipoprotein, the first step in the formation of mature lipoproteins. The sequence is that of Phosphatidylglycerol--prolipoprotein diacylglyceryl transferase from Vibrio parahaemolyticus serotype O3:K6 (strain RIMD 2210633).